We begin with the raw amino-acid sequence, 475 residues long: Aspartyl/glutamyl-tRNA(Asn/Gln) amidotransferase subunit B (475 aa).

It belongs to the GatB/GatE family. GatB subfamily. As to quaternary structure, heterotrimer of A, B and C subunits.

It catalyses the reaction L-glutamyl-tRNA(Gln) + L-glutamine + ATP + H2O = L-glutaminyl-tRNA(Gln) + L-glutamate + ADP + phosphate + H(+). The enzyme catalyses L-aspartyl-tRNA(Asn) + L-glutamine + ATP + H2O = L-asparaginyl-tRNA(Asn) + L-glutamate + ADP + phosphate + 2 H(+). Allows the formation of correctly charged Asn-tRNA(Asn) or Gln-tRNA(Gln) through the transamidation of misacylated Asp-tRNA(Asn) or Glu-tRNA(Gln) in organisms which lack either or both of asparaginyl-tRNA or glutaminyl-tRNA synthetases. The reaction takes place in the presence of glutamine and ATP through an activated phospho-Asp-tRNA(Asn) or phospho-Glu-tRNA(Gln). This chain is Aspartyl/glutamyl-tRNA(Asn/Gln) amidotransferase subunit B, found in Caldanaerobacter subterraneus subsp. tengcongensis (strain DSM 15242 / JCM 11007 / NBRC 100824 / MB4) (Thermoanaerobacter tengcongensis).